Here is a 364-residue protein sequence, read N- to C-terminus: Aminomethyltransferase (364 aa).

It belongs to the GcvT family. The glycine cleavage system is composed of four proteins: P, T, L and H.

The catalysed reaction is N(6)-[(R)-S(8)-aminomethyldihydrolipoyl]-L-lysyl-[protein] + (6S)-5,6,7,8-tetrahydrofolate = N(6)-[(R)-dihydrolipoyl]-L-lysyl-[protein] + (6R)-5,10-methylene-5,6,7,8-tetrahydrofolate + NH4(+). The glycine cleavage system catalyzes the degradation of glycine. This Photorhabdus laumondii subsp. laumondii (strain DSM 15139 / CIP 105565 / TT01) (Photorhabdus luminescens subsp. laumondii) protein is Aminomethyltransferase.